A 497-amino-acid chain; its full sequence is Lysine--tRNA ligase (497 aa).

Residues Glu409 and Glu416 each coordinate Mg(2+).

Belongs to the class-II aminoacyl-tRNA synthetase family. Homodimer. Mg(2+) is required as a cofactor.

The protein localises to the cytoplasm. The catalysed reaction is tRNA(Lys) + L-lysine + ATP = L-lysyl-tRNA(Lys) + AMP + diphosphate. In Streptococcus pyogenes serotype M49 (strain NZ131), this protein is Lysine--tRNA ligase.